We begin with the raw amino-acid sequence, 2513 residues long: MDSVYVDIDADSAFLKALQRAYPMFEVEPKQVTPNDHANARAFSHLAIKLIEQEIDPDSTILDIGPAPARRMMSDRKYHCVCPMRSAEDPERLANYARKLASAAGKVTDKNISGKINDLQAVMAVPNMETSTFCLHTDATCKQRGDVAIYQDVYAVHAPTSLYHQAIKGVRVAYWIGFDTTPFMYNAMAGAYPSYSTNWADEQVLKAKNIGLCSTDLSEGRRGKLSIMRGKKLKPCDRVLFSVGSTLYPESRKLLQSWHLPSVFHLKGKLSFTCRCDTIVSCEGYVVKRVTMSPGIYGKTSGYAVTHHADGFLMCKTTDTVDGERVSFSVCTYVPATICDQMTGILATEVTPEDAQKLLVGLNQRIVVNGRTQRNTNTMKNYLLPIVAQAFSKWAKECRKDMEDEKLLGVRERTLTCCCLWAFRKHKTHTVYKRPDTQSIQKVPAEFDSFVIPSLWSSGLSIPLRTRIKWLLSKAPKHEQLPHSGNAEEAAQAEMDAAEEREAELTREAMPPLQATQDDVQVEIDVEQLEDRAGAGIVETPRGAIKVTAQPSDRVVGEYLVLTPQAVLRSQKLSLIHALAEQVKTCTHSGRAGRYAVEAYDGRVLVPSGYAIPQEDFQSLSESATMVFNEREFVNRKLHHIAMHGPALNTDEESYELVRVEKTEHEYVYDVDQKKCCKREEATGLVLVGDLTSPPYHEFAYEGLKIRPACPYKTAVIGVFGVPGSGKSAIIKNLVTRQDLVTSGKKENCQEISNDVMRQRKLEISARTVDSLLLNGCNKPVEVLYVDEAFACHSGTLLALIAMVRPRQKVVLCGDPKQCGFFNMMQMKVNYNHNICTQVYHKSISRRCTLPVTAIVSSLHYESKMRTTNEYNQPIVVDTTGITKPEPGDLVLTCFRGWVKQLQIDYRGNEVMTAAASQGLTRKGVYAVRQKVNENPLYASTSEHVNVLLTRTEGKLIWKTLSGDPWIKILQNPPKGNFKATIKEWEAEHASIMAGICNHQMAFDTFQNKANVCWAKCLVPILDTAGIKLSDRQWSQIVQAFKEDRAYSPEVALNEICTRIYGVDLDSGLFSKPLISVYYADNHWDNRPGGKMFGFNPEVALMLEKKYPFTKGKWNINKQICITTRKVDEFNPETNIIPANRRLPHSLVAEHHTVRGERMEWLVNKINGHHMLLVSGYNLILPTKRVTWVAPLGTRGADYTYNLELGLPATLGRYDLVVINIHTPFRIHHYQQCVDHAMKLQMLGGDSLRLLKPGGSLLIRAYGYADRTSERVISVLGRKFRSSRALKPQCITSNTEMFFLFSRFDNGRRNFTTHVMNNQLNAVYAGLATRAGCAPSYRVKRMDIAKNTEECVVNAANPRGVPGDGVCKAVYRKWPESFRNSATPVGTAKTIMCGQYPVIHAVGPNFSNYSEAEGDRELASVYREVAKEVSRLGVSSVAIPLLSTGVYSGGKDRLLQSLNHLFTAMDSTDADVVIYCRDKEWEKKITEAISLRSQVELLDDHISVDCDIVRVHPDSSLAGRKGYSTVEGALYSYLEGTRFHQTAVDMAEIYTMWPKQTEANEQVCLYALGESIESVRQKCPVDDADASFPPKTVPCLCRYAMTPERVARLRMNHTTSIIVCSSFPLPKYKIEGVQKVKCSKALLFDHNVPSRVSPRTYRPADEIIQTPQIPTEACQDAQFVQSITDEAVPVPSDLEACDATMDWPSIDIVPTRQRSDSFDSEYSSRSNIQLVTADVHAPMYANSLASSGGSVLSLSSEQAQNGIMILPDSEDTDSISRVSTPIAPPRRRLGRTINVTCDEREGKILPMASDRLFTAKPYTVALGVSTADITAYPIQAPLGSTQPPALEQITFGDFAEGEIDNLLTGALTFGDFEPGEVEELTDSEWSTCSDTDEELXLDRAGGYIFSSDTGQGHLQQKSVRQTTLPVNIVEEVHEEKCYPPKLDEIKEQLLLKRLQESASTANRSRYQSRKVENMKATIIHRLKEGCRLYLASDTPRVPSYRITYPAPVYSPSISIKLNNPETAVAVCNEFLARNYPTVASYQVTDEYDAYLDMVDGSESCLDRATFNPSKLRSYPKQHSYHAPTIRSAVPSPFQNTLQNVLAAATKRNCNVTQMRELPTMDSAVFNVECFKKYACNQEYWREFASSPIRVTTENLTMYVTKLKGPKAAALFAKTHNLLPLQEVPMDRFTMDMKRDVKVTPGTKHTEERPKVQVIQAAEPLATAYLCGIHRELVRRLNAVLLPNVHTLFDMSAEDFDAIISTHFKPGDAVLETDIASFDKSQDDSLALTAMMLLEDLGVDQPILDLIEAAFGEISSCHLPTGTRFKFGAMMKSGMFLTLFVNTLLNITIASRVLEERLTTSACAAFIGDDNIIHGVVSDALMAARCATWMNMEVKIIDAVVSEKAPYFCGGFILHDTVTGTSCRVADPLKRLFKLGKPLAAGDEQDEDRRRALADEVTRWQRTGLITELEKAVYSRYEVQGITAVITSMATFASSKENFKKLRGPVVTLYGGPK.

One can recognise an Alphavirus-like MT domain in the interval 28–259 (EPKQVTPNDH…ESRKLLQSWH (232 aa)). The segment at 244–263 (GSTLYPESRKLLQSWHLPSV) is nsP1 membrane-binding. Residues C417 and C419 are each lipidated (S-palmitoyl cysteine; by host). The (+)RNA virus helicase ATP-binding domain maps to 690 to 842 (DLTSPPYHEF…HNICTQVYHK (153 aa)). Residue 721 to 728 (GVPGSGKS) coordinates a ribonucleoside 5'-triphosphate. Residues 843-991 (SISRRCTLPV…IKEWEAEHAS (149 aa)) enclose the (+)RNA virus helicase C-terminal domain. The region spanning 1004 to 1327 (DTFQNKANVC…NQLNAVYAGL (324 aa)) is the Peptidase C9 domain. A nucleolus localization signal region spans residues 1005–1024 (TFQNKANVCWAKCLVPILDT). C1013 (for cysteine protease nsP2 activity) is an active-site residue. A Nuclear export signal motif is present at residues 1058–1067 (TRIYGVDLDS). H1083 (for cysteine protease nsP2 activity) is an active-site residue. The Nuclear localization signal motif lies at 1182–1186 (PTKRV). 6 residues coordinate ADP-D-ribose: D1343, N1357, G1365, G1445, V1446, and Y1447. Residues C1595, C1597, C1620, and C1638 each coordinate Zn(2+). 2 consecutive short sequence motifs (FGDF; binding to host G3BP1) follow at residues 1851-1854 (FGDF) and 1869-1872 (FGDF). The RdRp catalytic domain occupies 2267–2382 (DAVLETDIAS…HGVVSDALMA (116 aa)).

As to quaternary structure, interacts with non-structural protein 3. Interacts with RNA-directed RNA polymerase nsP4. Interacts with protease nsP2. interacts with itself. Interacts with mRNA-capping enzyme nsP1. Interacts with host DDX1. Interacts with host DDX3. Interacts (via C-terminus) with host G3BP1; this interaction inhibits the formation of host stress granules on viral mRNAs and the nsp3-G3BP1 complexes bind viral RNAs and probably orchestrate the assembly of viral replication complexes. Interacts (via C-terminus) with host G3BP2; this interaction inhibits the formation of host stress granules on viral mRNAs and the nsp3-G3BP2 complexes bind viral RNAs and probably orchestrate the assembly of viral replication complexes. In terms of assembly, interacts with mRNA-capping enzyme nsP1. Interacts with protease nsP2. interacts with itself. As to quaternary structure, interacts with RNA-directed RNA polymerase nsP4. Interacts with mRNA-capping enzyme nsP1. Interacts with KPNA1/karyopherin-alpha1; this interaction probably allows the active transport of protease nsP2 into the host nucleus. It depends on Mg(2+) as a cofactor. Requires Mn(2+) as cofactor. Specific enzymatic cleavages in vivo yield mature proteins. The processing of the polyprotein is temporally regulated. In early stages (1.7 hpi), P1234 is first cleaved in trans through its nsP2 protease activity, releasing P123' and nsP4, which associate to form the early replication complex. At the same time, P1234 is also cut at the nsP1/nsP2 site early in infection but with lower efficiency. After replication of the viral minus-strand RNAs (4 hpi), the polyproteins are cut at the nsP1/nsP2 and nsP2/nsP3 sites very efficiently, preventing accumulation of P123' and P1234 and allowing the formation of the late replication complex. NsP3'/nsP4 site is not cleaved anymore and P34 is produced rather than nsP4. In terms of processing, specific enzymatic cleavages in vivo yield mature proteins. The processing of the polyprotein is temporally regulated. In early stages (1.7 hpi), P123 is cleaved at the nsP1/nsP2 site with low efficiency. After replication of the viral minus-strand RNAs (4 hpi), the polyproteins are cut at the nsP1/nsP2 and nsP2/nsP3 sites very efficiently, preventing accumulation of P123 and allowing the formation of the late replication complex. Post-translationally, specific enzymatic cleavages in vivo yield mature proteins. The processing of the polyprotein is temporally regulated. In early stages (1.7 hpi), P123 is cleaved at the nsP1/nsP2 site with low efficiency. After replication of the viral minus-strand RNAs (4 hpi), the polyproteins are cut at the nsP1/nsP2 and nsP2/nsP3 sites very efficiently, preventing accumulation of P123' and allowing the formation of the late replication complex. Palmitoylated by host palmitoyltransferases ZDHHC2 and ZDHHC19. In terms of processing, phosphorylated by host on serines and threonines. Post-translationally, ubiquitinated; targets the protein for rapid degradation via the ubiquitin system. Nsp4 is present in extremely low quantities due to low frequency of translation through the amber stop-codon and the degradation by the ubiquitin pathway.

Its subcellular location is the host cytoplasmic vesicle membrane. The protein resides in the host cell membrane. It is found in the host cell projection. It localises to the host filopodium. The protein localises to the host nucleus. Its subcellular location is the host cytoplasm. The enzyme catalyses GTP + S-adenosyl-L-methionine = N(7)-methyl-GTP + S-adenosyl-L-homocysteine. The catalysed reaction is N(7)-methyl-GTP + L-histidyl-[protein] = N(tele)-(N(7)-methylguanosine 5'-phospho)-L-histidyl-[protein] + diphosphate. It catalyses the reaction N(tele)-(N(7)-methylguanosine 5'-phospho)-L-histidyl-[protein] + a 5'-end diphospho-(purine-ribonucleoside) in mRNA + H(+) = a 5'-end (N(7)-methyl 5'-triphosphoguanosine)-(purine-ribonucleoside) in mRNA + L-histidyl-[protein]. It carries out the reaction a 5'-end triphospho-ribonucleoside in mRNA + H2O = a 5'-end diphospho-ribonucleoside in mRNA + phosphate + H(+). The enzyme catalyses a ribonucleoside 5'-triphosphate + H2O = a ribonucleoside 5'-diphosphate + phosphate + H(+). The catalysed reaction is ATP + H2O = ADP + phosphate + H(+). It catalyses the reaction RNA(n) + a ribonucleoside 5'-triphosphate = RNA(n+1) + diphosphate. It carries out the reaction 4-O-(ADP-D-ribosyl)-L-aspartyl-[protein] + H2O = L-aspartyl-[protein] + ADP-D-ribose + H(+). The enzyme catalyses 5-O-(ADP-D-ribosyl)-L-glutamyl-[protein] + H2O = L-glutamyl-[protein] + ADP-D-ribose + H(+). The catalysed reaction is RNA(n) + ATP = RNA(n)-3'-adenine ribonucleotide + diphosphate. It catalyses the reaction ADP-alpha-D-ribose 1''-phosphate + H2O = ADP-D-ribose + phosphate. Functionally, inactive precursor of the viral replicase, which is activated by cleavages carried out by the viral protease nsP2. In terms of biological role, the early replication complex formed by the polyprotein P123' and nsP4 synthesizes minus-strand RNAs. Polyprotein P123' is a short-lived polyprotein that accumulates during early stage of infection. As soon P123' is cleaved into mature proteins, the plus-strand RNAs synthesis begins. The early replication complex formed by the polyprotein P123 and nsP4 synthesizes minus-strand RNAs. As soon P123 is cleaved into mature proteins, the plus-strand RNAs synthesis begins. Its function is as follows. Cytoplasmic capping enzyme that catalyzes two virus-specific reactions: methyltransferase and nsP1 guanylyltransferase. mRNA-capping is necessary since all viral RNAs are synthesized in the cytoplasm, and host capping enzymes are restricted to the nucleus. The enzymatic reaction involves a covalent link between 7-methyl-GMP and nsP1, whereas eukaryotic capping enzymes form a covalent complex only with GMP. nsP1 capping consists in the following reactions: GTP is first methylated into 7-methyl-GMP and then is covalently linked to nsP1 to form the m7GMp-nsP1 complex from which 7-methyl-GMP complex is transferred to the mRNA to create the cap structure. NsP1 is also needed for the initiation of the minus-strand RNAs synthesis. Probably serves as a membrane anchor for the replication complex composed of nsP1-nsP4. Palmitoylated nsP1 is remodeling host cell cytoskeleton, and induces filopodium-like structure formation at the surface of the host cell. Functionally, multifunctional protein whose N-terminus is part of the RNA polymerase complex and displays NTPase, RNA triphosphatase and helicase activities. NTPase and RNA triphosphatase are involved in viral RNA capping and helicase keeps a check on the dsRNA replication intermediates. The C-terminus harbors a protease that specifically cleaves the polyproteins and releases the mature proteins. Required for the shutoff of minus-strand RNAs synthesis. Specifically inhibits the host IFN response by promoting the nuclear export of host STAT1. Also inhibits host transcription by inducing the rapid proteasome-dependent degradation of POLR2A, a catalytic subunit of the RNAPII complex. The resulting inhibition of cellular protein synthesis serves to ensure maximal viral gene expression and to evade host immune response. In terms of biological role, seems to be essential for minus-strand RNAs and subgenomic 26S mRNAs synthesis. Displays mono-ADP-ribosylhydrolase activity. ADP-ribosylation is a post-translational modification that controls various processes of the host cell and the virus probably needs to revert it for optimal viral replication. Binds proteins of FXR family and sequesters them into the viral RNA replication complexes thereby inhibiting the formation of host stress granules on viral mRNAs. The nsp3'-FXR complexes bind viral RNAs and probably orchestrate the assembly of viral replication complexes, thanks to the ability of FXR family members to self-assemble and bind DNA. Seems to be essential for minus-strand RNAs and subgenomic 26S mRNAs synthesis. Displays mono-ADP-ribosylhydrolase activity. ADP-ribosylation is a post-translational modification that controls various processes of the host cell and the virus probably needs to revert it for optimal viral replication. Binds proteins of G3BP family and sequesters them into the viral RNA replication complexes thereby inhibiting the formation of host stress granules on viral mRNAs. The nsp3-G3BP complexes bind viral RNAs and probably orchestrate the assembly of viral replication complexes, thanks to the ability of G3BP family members to self-assemble and bind DNA. Its function is as follows. RNA dependent RNA polymerase. Replicates genomic and antigenomic RNA by recognizing replications specific signals. The early replication complex formed by the polyprotein P123 and nsP4 synthesizes minus-strand RNAs. The late replication complex composed of fully processed nsP1-nsP4 is responsible for the production of genomic and subgenomic plus-strand RNAs. The sequence is that of Polyprotein P1234 from Anopheles (Human).